Here is a 709-residue protein sequence, read N- to C-terminus: Polyribonucleotide nucleotidyltransferase (709 aa).

Residues D485 and D491 each contribute to the Mg(2+) site. In terms of domain architecture, KH spans 552-611 (PRIYTMKIDPKKIKDVIGKGGATIRSLTEETGTSIDIDDDGTVKIAAVDSNAAKNVMGRI). The region spanning 621 to 689 (GAIYKGKVTR…RQGRIRLTMK (69 aa)) is the S1 motif domain.

The protein belongs to the polyribonucleotide nucleotidyltransferase family. In terms of assembly, component of the RNA degradosome, which is a multiprotein complex involved in RNA processing and mRNA degradation. Requires Mg(2+) as cofactor.

It localises to the cytoplasm. It carries out the reaction RNA(n+1) + phosphate = RNA(n) + a ribonucleoside 5'-diphosphate. Its function is as follows. Involved in mRNA degradation. Catalyzes the phosphorolysis of single-stranded polyribonucleotides processively in the 3'- to 5'-direction. This chain is Polyribonucleotide nucleotidyltransferase, found in Haemophilus influenzae (strain PittGG).